Reading from the N-terminus, the 228-residue chain is Cytidylate kinase (228 aa).

10–18 (GPSGSGKGT) contributes to the ATP binding site.

Belongs to the cytidylate kinase family. Type 1 subfamily.

Its subcellular location is the cytoplasm. It catalyses the reaction CMP + ATP = CDP + ADP. The catalysed reaction is dCMP + ATP = dCDP + ADP. The sequence is that of Cytidylate kinase from Acinetobacter baumannii (strain AB0057).